The sequence spans 83 residues: U5-theraphotoxin-Hs1a 5 (83 aa).

Residues 1 to 21 form the signal peptide; it reads MKTSMFLTLTGLVLLFVVCYA. A propeptide spanning residues 22 to 49 is cleaved from the precursor; it reads SESEEKEFPKELPSSIFAADSDFKVEER. Disulfide bonds link Cys51-Cys63, Cys56-Cys68, and Cys62-Cys75.

This sequence belongs to the neurotoxin 10 (Hwtx-1) family. 51 (Hntx-8) subfamily. Hntx-8 sub-subfamily. Expressed by the venom gland.

It is found in the secreted. Functionally, agglutinates erythrocytes. The sequence is that of U5-theraphotoxin-Hs1a 5 from Cyriopagopus schmidti (Chinese bird spider).